The primary structure comprises 433 residues: Serine/threonine-protein kinase Sgk1 (433 aa).

A disordered region spans residues 66-92; sequence QDVELMNSNPSPPPSPSQQINLGPSSN. A compositionally biased stretch (polar residues) spans 83-92; that stretch reads QQINLGPSSN. The Protein kinase domain occupies 100–357; that stretch reads FDFLKVIGKG…FTEIKNHMFF (258 aa). ATP-binding positions include 106–114 and lysine 129; that span reads IGKGSFGKV. Catalysis depends on aspartate 224, which acts as the Proton acceptor. The AGC-kinase C-terminal domain occupies 358–433; that stretch reads SPINWDDLNA…SYAPAMDSYL (76 aa).

The protein belongs to the protein kinase superfamily. AGC Ser/Thr protein kinase family.

It localises to the cytoplasm. Its subcellular location is the nucleus. The protein resides in the endoplasmic reticulum. The catalysed reaction is L-seryl-[protein] + ATP = O-phospho-L-seryl-[protein] + ADP + H(+). The enzyme catalyses L-threonyl-[protein] + ATP = O-phospho-L-threonyl-[protein] + ADP + H(+). Protein kinase that may play an important role in cellular stress response. May be involved in the regulation of processes such as cell survival, neuronal excitability and renal sodium excretion. This Danio rerio (Zebrafish) protein is Serine/threonine-protein kinase Sgk1 (sgk1).